The chain runs to 100 residues: Aspartyl/glutamyl-tRNA(Asn/Gln) amidotransferase subunit C (100 aa).

The protein belongs to the GatC family. As to quaternary structure, heterotrimer of A, B and C subunits.

It catalyses the reaction L-glutamyl-tRNA(Gln) + L-glutamine + ATP + H2O = L-glutaminyl-tRNA(Gln) + L-glutamate + ADP + phosphate + H(+). It carries out the reaction L-aspartyl-tRNA(Asn) + L-glutamine + ATP + H2O = L-asparaginyl-tRNA(Asn) + L-glutamate + ADP + phosphate + 2 H(+). In terms of biological role, allows the formation of correctly charged Asn-tRNA(Asn) or Gln-tRNA(Gln) through the transamidation of misacylated Asp-tRNA(Asn) or Glu-tRNA(Gln) in organisms which lack either or both of asparaginyl-tRNA or glutaminyl-tRNA synthetases. The reaction takes place in the presence of glutamine and ATP through an activated phospho-Asp-tRNA(Asn) or phospho-Glu-tRNA(Gln). In Streptococcus pyogenes serotype M18 (strain MGAS8232), this protein is Aspartyl/glutamyl-tRNA(Asn/Gln) amidotransferase subunit C.